Here is an 884-residue protein sequence, read N- to C-terminus: Protein translocase subunit SecA (884 aa).

Residues glutamine 83, 101-105, and aspartate 491 each bind ATP; that span reads GEGKT.

The protein belongs to the SecA family.

Its subcellular location is the plastid. It is found in the chloroplast stroma. It localises to the chloroplast thylakoid membrane. It carries out the reaction ATP + H2O + cellular proteinSide 1 = ADP + phosphate + cellular proteinSide 2.. Its function is as follows. Has a central role in coupling the hydrolysis of ATP to the transfer of proteins across the thylakoid membrane. The polypeptide is Protein translocase subunit SecA (Pyropia yezoensis (Susabi-nori)).